The following is a 92-amino-acid chain: Small ribosomal subunit protein uS19c (92 aa).

Belongs to the universal ribosomal protein uS19 family.

Its subcellular location is the plastid. The protein resides in the chloroplast. Functionally, protein S19 forms a complex with S13 that binds strongly to the 16S ribosomal RNA. The polypeptide is Small ribosomal subunit protein uS19c (Lemna minor (Common duckweed)).